The chain runs to 279 residues: Shikimate dehydrogenase (NADP(+)) (279 aa).

Residues 14-16 (SIS) and Thr63 contribute to the shikimate site. Lys67 (proton acceptor) is an active-site residue. Glu79 is a binding site for NADP(+). The shikimate site is built by Asn88 and Asp103. Residues 127-131 (GAGGA), 151-156 (NRTYEK), and Met219 each bind NADP(+). Tyr221 is a binding site for shikimate. Gly242 is an NADP(+) binding site.

The protein belongs to the shikimate dehydrogenase family. Homodimer.

The catalysed reaction is shikimate + NADP(+) = 3-dehydroshikimate + NADPH + H(+). Its pathway is metabolic intermediate biosynthesis; chorismate biosynthesis; chorismate from D-erythrose 4-phosphate and phosphoenolpyruvate: step 4/7. Its function is as follows. Involved in the biosynthesis of the chorismate, which leads to the biosynthesis of aromatic amino acids. Catalyzes the reversible NADPH linked reduction of 3-dehydroshikimate (DHSA) to yield shikimate (SA). The protein is Shikimate dehydrogenase (NADP(+)) of Caldicellulosiruptor saccharolyticus (strain ATCC 43494 / DSM 8903 / Tp8T 6331).